The following is a 347-amino-acid chain: Olfactory receptor 2M2 (347 aa).

At 1–25 the chain is on the extracellular side; sequence MAWENQTFNSDFILLGIFNHSPPHT. Asn-5 is a glycosylation site (N-linked (GlcNAc...) asparagine). A helical membrane pass occupies residues 26–49; sequence FLFFLVLGIFLVAFMGNSVMVLLI. The Cytoplasmic segment spans residues 50 to 57; it reads YLDTQLHT. A helical transmembrane segment spans residues 58–79; the sequence is PMYFLLSQLSLMDLMLICTTVP. Over 80–100 the chain is Extracellular; that stretch reads KMAFNYLSGSKSISMAGCVTQ. Cys-97 and Cys-189 are oxidised to a cystine. The helical transmembrane segment at 101-120 threads the bilayer; sequence IFFYISLSGSECFLLAVMAY. The Cytoplasmic segment spans residues 121–139; sequence DRYIAICHPLRYTNLMNPK. A helical membrane pass occupies residues 140-158; that stretch reads ICGLMATFSWILGSTDGII. Topologically, residues 159 to 195 are extracellular; sequence DAVATFSFSFCGSREIAHFFCEFPSLLILSCNDTSIF. Residue Asn-190 is glycosylated (N-linked (GlcNAc...) asparagine). The helical transmembrane segment at 196-219 threads the bilayer; that stretch reads EEVIFICCIVMLVFPVAIIIASYA. At 220–236 the chain is on the cytoplasmic side; that stretch reads RVILAVIHMGSGEGRCK. A helical transmembrane segment spans residues 237 to 259; the sequence is AFTTCSSHLMVVGMYYGAALFMY. At 260–272 the chain is on the extracellular side; that stretch reads IRPTSDHSPTQDK. The helical transmembrane segment at 273–292 threads the bilayer; it reads MVSVFYTILTPMLNPLIYSL. At 293-347 the chain is on the cytoplasmic side; it reads RNKEVTRAFMKILGKGKSESELPHKLYVLLFAKFFFLISIFFYDVKILALIMYIA.

Belongs to the G-protein coupled receptor 1 family.

The protein localises to the cell membrane. Functionally, odorant receptor. The sequence is that of Olfactory receptor 2M2 (OR2M2) from Homo sapiens (Human).